A 152-amino-acid polypeptide reads, in one-letter code: 6,7-dimethyl-8-ribityllumazine synthase (152 aa).

5-amino-6-(D-ribitylamino)uracil-binding positions include F21, 55–57 (AFE), and 79–81 (CVI). 84–85 (AT) serves as a coordination point for (2S)-2-hydroxy-3-oxobutyl phosphate. H87 functions as the Proton donor in the catalytic mechanism. F112 provides a ligand contact to 5-amino-6-(D-ribitylamino)uracil. Residue R126 coordinates (2S)-2-hydroxy-3-oxobutyl phosphate.

The protein belongs to the DMRL synthase family. Forms an icosahedral capsid composed of 60 subunits, arranged as a dodecamer of pentamers.

The enzyme catalyses (2S)-2-hydroxy-3-oxobutyl phosphate + 5-amino-6-(D-ribitylamino)uracil = 6,7-dimethyl-8-(1-D-ribityl)lumazine + phosphate + 2 H2O + H(+). The protein operates within cofactor biosynthesis; riboflavin biosynthesis; riboflavin from 2-hydroxy-3-oxobutyl phosphate and 5-amino-6-(D-ribitylamino)uracil: step 1/2. Catalyzes the formation of 6,7-dimethyl-8-ribityllumazine by condensation of 5-amino-6-(D-ribitylamino)uracil with 3,4-dihydroxy-2-butanone 4-phosphate. This is the penultimate step in the biosynthesis of riboflavin. The sequence is that of 6,7-dimethyl-8-ribityllumazine synthase from Staphylococcus carnosus (strain TM300).